The chain runs to 356 residues: Putative methylthioribose-1-phosphate isomerase (356 aa).

Substrate is bound by residues 57-59 (RGA), Arg-100, and Gln-206. Catalysis depends on Asp-247, which acts as the Proton donor. 257–258 (NK) provides a ligand contact to substrate.

Belongs to the eIF-2B alpha/beta/delta subunits family. MtnA subfamily.

It catalyses the reaction 5-(methylsulfanyl)-alpha-D-ribose 1-phosphate = 5-(methylsulfanyl)-D-ribulose 1-phosphate. Its function is as follows. Catalyzes the interconversion of methylthioribose-1-phosphate (MTR-1-P) into methylthioribulose-1-phosphate (MTRu-1-P). In Pyrococcus furiosus (strain ATCC 43587 / DSM 3638 / JCM 8422 / Vc1), this protein is Putative methylthioribose-1-phosphate isomerase.